A 262-amino-acid polypeptide reads, in one-letter code: MQTIIRVEKLAKTFNQHQALHAVDLNIHHSEMVALLGPSGSGKSTLLRHLSGLITGDKSAGSHIELLGRTVQREGRLARDIRKSRAHTGYIFQQFNLVNRLSVLENVLIGALGSTPFWRTCFSWFTREQKQRALQALTRVGMVHFAHQRVSTLSGGQQQRVAIARALMQQAKVILADEPIASLDPESARIVMDTLRDINQNDGITVVVTLHQVDYALRYCERIVALRQGHVFYDGSSQQFDNERFDHLYRSINRIEENAKAA.

An ABC transporter domain is found at 5 to 253 (IRVEKLAKTF…RFDHLYRSIN (249 aa)). 37–44 (GPSGSGKS) contacts ATP.

It belongs to the ABC transporter superfamily. Phosphonates importer (TC 3.A.1.9.1) family. The complex is composed of two ATP-binding proteins (PhnC), two transmembrane proteins (PhnE) and a solute-binding protein (PhnD).

Its subcellular location is the cell inner membrane. It carries out the reaction phosphonate(out) + ATP + H2O = phosphonate(in) + ADP + phosphate + H(+). Functionally, part of the ABC transporter complex PhnCDE involved in phosphonates import. Responsible for energy coupling to the transport system. The polypeptide is Phosphonates import ATP-binding protein PhnC (Shigella boydii serotype 4 (strain Sb227)).